A 316-amino-acid chain; its full sequence is Transaldolase (316 aa).

Catalysis depends on Lys-131, which acts as the Schiff-base intermediate with substrate.

The protein belongs to the transaldolase family. Type 1 subfamily. Homodimer.

Its subcellular location is the cytoplasm. The catalysed reaction is D-sedoheptulose 7-phosphate + D-glyceraldehyde 3-phosphate = D-erythrose 4-phosphate + beta-D-fructose 6-phosphate. It participates in carbohydrate degradation; pentose phosphate pathway; D-glyceraldehyde 3-phosphate and beta-D-fructose 6-phosphate from D-ribose 5-phosphate and D-xylulose 5-phosphate (non-oxidative stage): step 2/3. Functionally, transaldolase is important for the balance of metabolites in the pentose-phosphate pathway. The polypeptide is Transaldolase (Buchnera aphidicola subsp. Acyrthosiphon pisum (strain 5A)).